We begin with the raw amino-acid sequence, 109 residues long: Spermidine export protein MdtI (109 aa).

Topologically, residues 1-5 are periplasmic; it reads MAQFE. A helical membrane pass occupies residues 6-26; that stretch reads WVHAAWLALAIVLEIIANVFL. The Cytoplasmic portion of the chain corresponds to 27 to 35; the sequence is KFSDGFRRK. The chain crosses the membrane as a helical span at residues 36–56; sequence IFGLLSLAAVLAAFSALSQAV. Topologically, residues 57–63 are periplasmic; it reads KGIDLSV. The chain crosses the membrane as a helical span at residues 64–84; that stretch reads AYALWGGFGIAATLAAGWILF. At 85–87 the chain is on the cytoplasmic side; sequence GQR. A helical transmembrane segment spans residues 88-108; that stretch reads LNRKGWIGLVLLLAGMIMVKL. A topological domain (periplasmic) is located at residue Ala-109.

It belongs to the drug/metabolite transporter (DMT) superfamily. Small multidrug resistance (SMR) (TC 2.A.7.1) family. MdtI subfamily. As to quaternary structure, forms a complex with MdtJ.

Its subcellular location is the cell inner membrane. Catalyzes the excretion of spermidine. The protein is Spermidine export protein MdtI (mdtI) of Escherichia coli O6:H1 (strain CFT073 / ATCC 700928 / UPEC).